Consider the following 233-residue polypeptide: Leucyl/phenylalanyl-tRNA--protein transferase (233 aa).

This sequence belongs to the L/F-transferase family.

The protein localises to the cytoplasm. It carries out the reaction N-terminal L-lysyl-[protein] + L-leucyl-tRNA(Leu) = N-terminal L-leucyl-L-lysyl-[protein] + tRNA(Leu) + H(+). The enzyme catalyses N-terminal L-arginyl-[protein] + L-leucyl-tRNA(Leu) = N-terminal L-leucyl-L-arginyl-[protein] + tRNA(Leu) + H(+). It catalyses the reaction L-phenylalanyl-tRNA(Phe) + an N-terminal L-alpha-aminoacyl-[protein] = an N-terminal L-phenylalanyl-L-alpha-aminoacyl-[protein] + tRNA(Phe). Functions in the N-end rule pathway of protein degradation where it conjugates Leu, Phe and, less efficiently, Met from aminoacyl-tRNAs to the N-termini of proteins containing an N-terminal arginine or lysine. This Shewanella denitrificans (strain OS217 / ATCC BAA-1090 / DSM 15013) protein is Leucyl/phenylalanyl-tRNA--protein transferase.